The primary structure comprises 1087 residues: Exportin-7-A (1087 aa).

In terms of domain architecture, Importin N-terminal spans 30 to 96 (AEKALVEFTN…RNYVLTYLAT (67 aa)).

It belongs to the exportin family. As to expression, expressed in oocytes (at protein level).

It localises to the cytoplasm. The protein resides in the nucleus. Functionally, mediates the nuclear export of proteins (cargos) with broad substrate specificity. This is Exportin-7-A (xpo7-a) from Xenopus laevis (African clawed frog).